A 184-amino-acid polypeptide reads, in one-letter code: Inactive cytochrome P450 monooxygenase lolP2 (184 aa).

Residues 10 to 30 (GIVWLTVAAIAISYILQSSFL) traverse the membrane as a helical segment. The disordered stretch occupies residues 161–184 (RRTRGSRPRSRPRWMPARWSRSSP). Over residues 163 to 172 (TRGSRPRSRP) the composition is skewed to basic residues. Residues 173-184 (RWMPARWSRSSP) show a composition bias toward low complexity.

This sequence belongs to the cytochrome P450 family.

Its subcellular location is the membrane. Functionally, cytochrome P450 monooxygenase; part of the gene cluster that mediates the biosynthesis of loline alkaloids, potent insecticidal agents composed of a pyrrolizidine ring system and an uncommon ether bridge linking carbons 2 and 7. Lolines are structurally differentiated by the various modifications of the L-amino group and include norloline, loline, N-methylloline, N-acetylloline, N-acetylnorloline, and N-formylloline. The first committed step is the condensation of O-acetyl-L-homoserine (derived from L-aspartic acid) and L-proline, probably catalyzed by the gamma-type pyridoxal 5'-phosphate(PLP)-dependent enzyme lolC, to give the diamino diacid, NACPP. Ensuing cyclization, decarboxylation, and acetylation steps yield 1-exo-acetamidopyrrolizidine (AcAP). LolO is required for installation of the ether bridge upon the pathway intermediate, 1-exo-acetamidopyrrolizidine (AcAP). In sequential 2-oxoglutarate- and O(2)-consuming steps, lolO removes hydrogens from C2 and C7 of AcAP to form both carbon-oxygen bonds in N-acetylnorloline (NANL), the precursor to all other lolines. The enzymes lolD, lolE, lolF and lolT have also been proposed to be involved in the ether-bridge installation. Further processing of the exocyclic moiety of NANL by fungal N-acetamidase (LolN), methyltransferase (LolM), and cytochrome P450 (LolP) enzymes, with occasional involvement of a plant acetyltransferase, generates the other known lolines. LolN transforms NANL to norlonine which is monomethylated and dimethylated to respectively lonine and N-methyllonine (NML) by lolM. LolP catalyzes hydroxylation of the methyl group in N-methylloline (NML) and further oxygenation to N-formylloline (NFL). A plant acetyltransferase is responsible for the acetylation of loline to form N-acetylloline (NAL). LolA might interact with aspartate kinase to prevent feedback inhibition of its activity by these end products and thereby promote production of L-homoserine from L-aspartate. This Epichloe uncinata (Endophyte fungus) protein is Inactive cytochrome P450 monooxygenase lolP2.